A 336-amino-acid polypeptide reads, in one-letter code: Dihydroorotate dehydrogenase (quinone) (336 aa).

Residues 62-66 and T86 contribute to the FMN site; that span reads AGLDK. Position 66 (K66) interacts with substrate. 111-115 contributes to the substrate binding site; that stretch reads NRMGF. N139 and N172 together coordinate FMN. Substrate is bound at residue N172. Residue S175 is the Nucleophile of the active site. A substrate-binding site is contributed by N177. FMN is bound by residues K217 and T245. Residue 246-247 coordinates substrate; sequence NT. FMN contacts are provided by residues G268, G297, and 318–319; that span reads YS.

The protein belongs to the dihydroorotate dehydrogenase family. Type 2 subfamily. Monomer. It depends on FMN as a cofactor.

It is found in the cell membrane. The enzyme catalyses (S)-dihydroorotate + a quinone = orotate + a quinol. It functions in the pathway pyrimidine metabolism; UMP biosynthesis via de novo pathway; orotate from (S)-dihydroorotate (quinone route): step 1/1. Functionally, catalyzes the conversion of dihydroorotate to orotate with quinone as electron acceptor. The polypeptide is Dihydroorotate dehydrogenase (quinone) (Aeromonas hydrophila subsp. hydrophila (strain ATCC 7966 / DSM 30187 / BCRC 13018 / CCUG 14551 / JCM 1027 / KCTC 2358 / NCIMB 9240 / NCTC 8049)).